The chain runs to 146 residues: Protein MGF 100-3L (146 aa).

Belongs to the asfivirus MGF 100 family.

In terms of biological role, plays a role in virus cell tropism, and may be required for efficient virus replication in macrophages. In Ornithodoros (relapsing fever ticks), this protein is Protein MGF 100-3L.